The chain runs to 209 residues: MSNVHLISHPLVQHKLTLMRRKNASTSTFRTLLAELSNLMAYEVTRDMPLQDIEVETPLETTTGKIIDGKKLVLVSILRAGNGFLDGFLNVVPGARVGHIGLYRDPETLSPVEYYFKMPQEMQERDIVIVDPMLATGNSAIAAVDRLKQLKPRSIKFVCLLTCPEGVAALQKAHPDVDIYTAAIDRQLNEHGYILPGLGDAGDRIFGTK.

5-phospho-alpha-D-ribose 1-diphosphate contacts are provided by residues Arg-79, Arg-104, and 131-139 (DPMLATGNS). Uracil-binding positions include Ile-194 and 199 to 201 (GDA). Asp-200 provides a ligand contact to 5-phospho-alpha-D-ribose 1-diphosphate.

The protein belongs to the UPRTase family. Mg(2+) serves as cofactor.

The catalysed reaction is UMP + diphosphate = 5-phospho-alpha-D-ribose 1-diphosphate + uracil. It participates in pyrimidine metabolism; UMP biosynthesis via salvage pathway; UMP from uracil: step 1/1. Its activity is regulated as follows. Allosterically activated by GTP. Functionally, catalyzes the conversion of uracil and 5-phospho-alpha-D-ribose 1-diphosphate (PRPP) to UMP and diphosphate. In Polaromonas naphthalenivorans (strain CJ2), this protein is Uracil phosphoribosyltransferase.